The primary structure comprises 125 residues: Photoactive yellow protein (125 aa).

A PAS domain is found at 23–86 (LNQLAFGAIQ…GRFKEGVANG (64 aa)). The residue at position 69 (cysteine 69) is an S-(4-hydroxycinnamyl)cysteine.

It belongs to the photoactive yellow protein family. In terms of processing, the 4-hydroxycinnamic acid (p-coumaric acid) chromophore is covalently bound via a thioester linkage.

Its function is as follows. Photoactive blue light protein. Probably functions as a photoreceptor for a negative phototaxis response. The protein is Photoactive yellow protein (pyp) of Halochromatium salexigens (Chromatium salexigens).